We begin with the raw amino-acid sequence, 189 residues long: MLGSRAVMLLLLLPWTAQGRAVPGGSSPAWTQCQQLSQKLCTLAWSAHPLVGHMDLREEGDEETTNDVPHIQCGDGCDPQGLRDNSQFCLQRIHQGLIFYEKLLGSDIFTGEPSLLPDSPVGQLHASLLGLSQLLQPEGHHWETQQIPSLSPSQPWQRLLLRFKILRSLQAFVAVAARVFAHGAATLSP.

The signal sequence occupies residues 1–19 (MLGSRAVMLLLLLPWTAQG). A disulfide bridge links Cys-77 with Cys-89.

This sequence belongs to the IL-6 superfamily. As to quaternary structure, heterodimer with IL12B; disulfide-linked. The heterodimer is known as interleukin IL-23. Interacts with IL23R; this interaction enables recruitment of IL12RB1. In terms of tissue distribution, secreted by activated dendritic and phagocytic cells and keratinocytes. Also expressed by dermal Langerhans cells (at protein level).

It localises to the secreted. In terms of biological role, associates with IL12B to form the pro-inflammatory cytokine IL-23 that plays different roles in innate and adaptive immunity. Released by antigen-presenting cells such as dendritic cells or macrophages, binds to a heterodimeric receptor complex composed of IL12RB1 and IL23R to activate JAK2 and TYK2 which then phosphorylate the receptor to form a docking site leading to the phosphorylation of STAT3 and STAT4. This process leads to activation of several pathways including p38 MAPK or NF-kappa-B and promotes the production of pro-inflammatory cytokines such as interleukin-17A/IL17A. In turn, participates in the early and effective intracellular bacterial clearance. Promotes the expansion and survival of T-helper 17 cells, a CD4-positive helper T-cell subset that produces IL-17, as well as other IL-17-producing cells. In Homo sapiens (Human), this protein is Interleukin-23 subunit alpha (IL23A).